Here is a 553-residue protein sequence, read N- to C-terminus: Formate--tetrahydrofolate ligase (553 aa).

Thr-64–Thr-71 provides a ligand contact to ATP.

It belongs to the formate--tetrahydrofolate ligase family.

It carries out the reaction (6S)-5,6,7,8-tetrahydrofolate + formate + ATP = (6R)-10-formyltetrahydrofolate + ADP + phosphate. The protein operates within one-carbon metabolism; tetrahydrofolate interconversion. The sequence is that of Formate--tetrahydrofolate ligase from Pseudothermotoga lettingae (strain ATCC BAA-301 / DSM 14385 / NBRC 107922 / TMO) (Thermotoga lettingae).